Here is a 310-residue protein sequence, read N- to C-terminus: ADP-L-glycero-D-manno-heptose-6-epimerase (310 aa).

Residues 10-11, 31-32, Lys-38, Lys-53, 75-79, and Asn-92 contribute to the NADP(+) site; these read FI, DN, and EGACS. The Proton acceptor role is filled by Tyr-140. Lys-144 provides a ligand contact to NADP(+). Residue Asn-169 participates in substrate binding. Residues Val-170 and Lys-178 each contribute to the NADP(+) site. Catalysis depends on Lys-178, which acts as the Proton acceptor. Substrate-binding positions include Ser-180, His-187, 201–204, Arg-209, and Tyr-272; that span reads FEGS.

This sequence belongs to the NAD(P)-dependent epimerase/dehydratase family. HldD subfamily. In terms of assembly, homopentamer. Requires NADP(+) as cofactor.

The enzyme catalyses ADP-D-glycero-beta-D-manno-heptose = ADP-L-glycero-beta-D-manno-heptose. Its pathway is nucleotide-sugar biosynthesis; ADP-L-glycero-beta-D-manno-heptose biosynthesis; ADP-L-glycero-beta-D-manno-heptose from D-glycero-beta-D-manno-heptose 7-phosphate: step 4/4. In terms of biological role, catalyzes the interconversion between ADP-D-glycero-beta-D-manno-heptose and ADP-L-glycero-beta-D-manno-heptose via an epimerization at carbon 6 of the heptose. This is ADP-L-glycero-D-manno-heptose-6-epimerase from Salmonella dublin (strain CT_02021853).